The sequence spans 1740 residues: Vitamin B12-dependent ribonucleoside-diphosphate reductase (1740 aa).

In terms of domain architecture, ATP-cone spans 4 to 96 (EKVMKRDGRI…LYRKKKAEIR (93 aa)). Residues Thr257, 272–273 (AC), and Gly301 contribute to the substrate site. A disulfide bridge connects residues Cys273 and Cys1308. The DOD-type homing endonuclease 1 domain occupies 443-582 (LAGFIAGDGC…VTHYLNALGI (140 aa)). Residue Asn913 is the Proton acceptor of the active site. 913–914 (NP) contacts substrate. One can recognise a DOD-type homing endonuclease 2 domain in the interval 1063 to 1194 (VLGWFIGDGY…VQDLLLLFGI (132 aa)). Cys1297 functions as the Cysteine radical intermediate in the catalytic mechanism. Substrate contacts are provided by residues 1297–1299 (CGE) and 1471–1475 (PTGSV). Glu1299 functions as the Proton acceptor in the catalytic mechanism.

The protein belongs to the ribonucleoside diphosphate reductase class-2 family. It depends on adenosylcob(III)alamin as a cofactor. In terms of processing, this protein undergoes a protein self splicing that involves a post-translational excision of the intervening region (intein) followed by peptide ligation.

The catalysed reaction is a 2'-deoxyribonucleoside 5'-diphosphate + [thioredoxin]-disulfide + H2O = a ribonucleoside 5'-diphosphate + [thioredoxin]-dithiol. In terms of biological role, provides the precursors necessary for DNA synthesis. Catalyzes the biosynthesis of deoxyribonucleotides from the corresponding ribonucleotides. The protein is Vitamin B12-dependent ribonucleoside-diphosphate reductase (rnr) of Pyrococcus furiosus (strain ATCC 43587 / DSM 3638 / JCM 8422 / Vc1).